The following is a 236-amino-acid chain: Transmembrane protein 70 homolog, mitochondrial (236 aa).

Residues 1-64 (MLGLRAMLPK…WLSVKSTKTE (64 aa)) constitute a mitochondrion transit peptide. A run of 2 helical transmembrane segments spans residues 83-103 (MVKF…PILL) and 116-136 (VFLC…LHFI).

This sequence belongs to the TMEM70 family. As to quaternary structure, associates with mitochondrial complex I assembly intermediates during its biogenesis.

Its subcellular location is the mitochondrion membrane. In terms of biological role, scaffold protein that participates in the c-ring assembly of mitochondrial ATP synthase (F(1)F(0) ATP synthase or complex V). Also binds the mitochondrial proton-transporting ATP synthase complex I and may play a role in the stability of its membrane-bound subassemblies. The polypeptide is Transmembrane protein 70 homolog, mitochondrial (Drosophila melanogaster (Fruit fly)).